A 260-amino-acid polypeptide reads, in one-letter code: Carbonic anhydrase 3 (260 aa).

Ala2 carries the N-acetylalanine modification. Residues 3–259 (KEWGYASHNG…VKGRVVRASF (257 aa)) form the Alpha-carbonic anhydrase domain. 5 positions are modified to phosphoserine: Ser29, Ser43, Ser48, Ser50, and Ser55. The involved in proton transfer stretch occupies residues 64–67 (KTCR). Thr73 is modified (phosphothreonine). The Zn(2+) site is built by His94, His96, and His119. Tyr127 bears the Phosphotyrosine mark. Thr129 and Thr176 each carry phosphothreonine. 2 positions are modified to S-glutathionyl cysteine: Cys182 and Cys187. 198–199 (TT) is a substrate binding site. Position 216 is a phosphothreonine (Thr216). Ser219 is subject to Phosphoserine.

Belongs to the alpha-carbonic anhydrase family. Requires Zn(2+) as cofactor. In terms of processing, S-thiolated both by thiol-disulfide exchange with glutathione disulfide and by oxyradical-initiated S-thiolation with reduced glutathione. S-glutathionylated in hepatocytes under oxidative stress. Expressed at lower levels in adipose tissue from animals that were either genetically obese or had experimentally induced obesity.

The protein localises to the cytoplasm. It catalyses the reaction hydrogencarbonate + H(+) = CO2 + H2O. Its activity is regulated as follows. Inhibited by acetazolamide. In terms of biological role, reversible hydration of carbon dioxide. The polypeptide is Carbonic anhydrase 3 (Mus musculus (Mouse)).